We begin with the raw amino-acid sequence, 264 residues long: 5'-nucleotidase SurE (264 aa).

The a divalent metal cation site is built by D10, D11, S43, and N99.

Belongs to the SurE nucleotidase family. A divalent metal cation is required as a cofactor.

The protein localises to the cytoplasm. It catalyses the reaction a ribonucleoside 5'-phosphate + H2O = a ribonucleoside + phosphate. In terms of biological role, nucleotidase that shows phosphatase activity on nucleoside 5'-monophosphates. This is 5'-nucleotidase SurE from Methanococcus maripaludis (strain C6 / ATCC BAA-1332).